The sequence spans 367 residues: 3-ketodihydrosphingosine reductase ksrA (367 aa).

The chain crosses the membrane as a helical span at residues Ala-12–Ser-32. Positions 53, 55, 57, 78, 82, 108, and 109 each coordinate NADPH. Residues Gly-53–Gly-57 carry the GXSXG motif. Residues Leu-193–Pro-213 traverse the membrane as a helical segment. Tyr-211 functions as the Proton acceptor in the catalytic mechanism. Residues Tyr-211, Lys-215, and Ile-259 each coordinate NADP(+). The active-site Lowers pKa of active site Tyr is the Lys-215.

The protein belongs to the short-chain dehydrogenases/reductases (SDR) family.

Its subcellular location is the endoplasmic reticulum membrane. It carries out the reaction sphinganine + NADP(+) = 3-oxosphinganine + NADPH + H(+). It functions in the pathway lipid metabolism; sphingolipid metabolism. Its function is as follows. Catalyzes the reduction of 3'-oxosphinganine (3-ketodihydrosphingosine/KDS) to sphinganine (dihydrosphingosine/DHS), the second step of de novo sphingolipid biosynthesis. In Aspergillus fumigatus (strain ATCC MYA-4609 / CBS 101355 / FGSC A1100 / Af293) (Neosartorya fumigata), this protein is 3-ketodihydrosphingosine reductase ksrA.